The following is a 156-amino-acid chain: Small ribosomal subunit protein uS7 (156 aa).

It belongs to the universal ribosomal protein uS7 family. As to quaternary structure, part of the 30S ribosomal subunit. Contacts proteins S9 and S11.

Its function is as follows. One of the primary rRNA binding proteins, it binds directly to 16S rRNA where it nucleates assembly of the head domain of the 30S subunit. Is located at the subunit interface close to the decoding center, probably blocks exit of the E-site tRNA. This Alkaliphilus oremlandii (strain OhILAs) (Clostridium oremlandii (strain OhILAs)) protein is Small ribosomal subunit protein uS7.